The following is a 1054-amino-acid chain: Putative disease resistance RPP13-like protein 1 (1054 aa).

Leucine-zipper regions lie at residues Leu-9–Leu-20 and Leu-39–Leu-53. The stretch at Asp-117–Leu-147 forms a coiled coil. An NB-ARC domain is found at Leu-152–Ser-462. Gly-203–Thr-210 serves as a coordination point for ATP. 5 LRR repeats span residues Arg-579–Asn-600, His-603–Met-624, Asn-626–Leu-648, Asn-650–Lys-672, and Thr-676–His-697. Residues Pro-1018–Asp-1054 are disordered. The segment covering Arg-1043–Asp-1054 has biased composition (basic and acidic residues).

It belongs to the disease resistance NB-LRR family. RPP13 subfamily.

Functionally, potential disease resistance protein. The polypeptide is Putative disease resistance RPP13-like protein 1 (RPPL1) (Arabidopsis thaliana (Mouse-ear cress)).